The chain runs to 443 residues: GTPase Der (443 aa).

EngA-type G domains are found at residues P3 to E167 and V176 to M349. Residues G9 to S16, D56 to F60, N119 to E122, G182 to S189, D229 to M233, and N294 to D297 each bind GTP. A KH-like domain is found at A350 to K434.

It belongs to the TRAFAC class TrmE-Era-EngA-EngB-Septin-like GTPase superfamily. EngA (Der) GTPase family. As to quaternary structure, associates with the 50S ribosomal subunit.

Its function is as follows. GTPase that plays an essential role in the late steps of ribosome biogenesis. The chain is GTPase Der from Dechloromonas aromatica (strain RCB).